Reading from the N-terminus, the 671-residue chain is Probable potassium transport system protein Kup 2 (671 aa).

12 helical membrane-spanning segments follow: residues 18–38 (GFLIALGIVYGDIGTSPLYAM), 60–80 (VSLVIWTLTLITTVKYVLIAL), 103–123 (WLIVPAMIGGATLLADGALTP), 149–169 (VTTLIILAFLFLIQRFGASLV), 173–193 (FGPIMFIWFGFLGVSGLINSF), 218–238 (AGFFILGSIFLVTTGAEALYS), 252–272 (WPFVKICIILSYCGQGAWLLA), 292–312 (MVIYVVILSTLAAIIASQALI), 343–363 (LYIPAVNFALWVTTSFFVLYF), 373–393 (YSLAITITMLMTTTLLTYFLI), 402–422 (IAFISIGLFCIEGSFFAASLV), and 424–444 (FINGAYIVVLIALAIIFVMFI).

It belongs to the HAK/KUP transporter (TC 2.A.72) family.

The protein localises to the cell membrane. It catalyses the reaction K(+)(in) + H(+)(in) = K(+)(out) + H(+)(out). Its function is as follows. Transport of potassium into the cell. Likely operates as a K(+):H(+) symporter. This Lactococcus lactis subsp. cremoris (strain MG1363) protein is Probable potassium transport system protein Kup 2.